The chain runs to 428 residues: Histone deacetylase 3 (428 aa).

Positions 3–316 (KTVAYFYDPD…WTYETSLLVD (314 aa)) are histone deacetylase. Residues His-17, Gly-21, and Lys-25 each contribute to the 1D-myo-inositol 1,4,5,6-tetrakisphosphate site. Residue His-135 is part of the active site. Asp-170, His-172, and Asp-259 together coordinate Zn(2+). 1D-myo-inositol 1,4,5,6-tetrakisphosphate is bound at residue Arg-265. Composition is skewed to basic and acidic residues over residues 386-405 (SYER…DNYS) and 415-428 (DGDH…DVEI). The disordered stretch occupies residues 386–428 (SYERTDEPDPEERGSEDNYSRPEASNEFYDGDHDNDKESDVEI).

The protein belongs to the histone deacetylase family. HD type 1 subfamily.

The protein localises to the nucleus. Its subcellular location is the chromosome. It is found in the cytoplasm. The protein resides in the cytosol. The enzyme catalyses N(6)-acetyl-L-lysyl-[histone] + H2O = L-lysyl-[histone] + acetate. It catalyses the reaction N(6)-acetyl-L-lysyl-[protein] + H2O = L-lysyl-[protein] + acetate. The catalysed reaction is N(6)-(2E)-butenoyl-L-lysyl-[protein] + H2O = (2E)-2-butenoate + L-lysyl-[protein]. It carries out the reaction N(6)-(2-hydroxyisobutanoyl)-L-lysyl-[protein] + H2O = 2-hydroxy-2-methylpropanoate + L-lysyl-[protein]. The enzyme catalyses N(6)-[(S)-lactoyl]-L-lysyl-[protein] + H2O = (S)-lactate + L-lysyl-[protein]. Its activity is regulated as follows. Inositol tetraphosphate (1D-myo-inositol 1,4,5,6-tetrakisphosphate) promotes the histone deacetylase activity by acting as an intermolecular glue between hdac3 and N-Cor repressor complex components. In terms of biological role, histone deacetylase that catalyzes the deacetylation of lysine residues on the N-terminal part of the core histones (H2A, H2B, H3 and H4), and some other non-histone substrates. Histone deacetylation gives a tag for epigenetic repression and plays an important role in transcriptional regulation, cell cycle progression and developmental events. Histone deacetylases act via the formation of large multiprotein complexes, such as N-Cor repressor complex, which activate the histone deacetylase activity. Participates in the BCL6 transcriptional repressor activity by deacetylating the H3 'Lys-27' (H3K27) on enhancer elements, antagonizing EP300 acetyltransferase activity and repressing proximal gene expression. Also functions as a deacetylase for non-histone targets. In addition to protein deacetylase activity, also acts as a protein-lysine deacylase by recognizing other acyl groups: catalyzes removal of (2E)-butenoyl (crotonyl), lactoyl (lactyl) and 2-hydroxyisobutanoyl (2-hydroxyisobutyryl) acyl groups from lysine residues, leading to protein decrotonylation, delactylation and de-2-hydroxyisobutyrylation, respectively. The sequence is that of Histone deacetylase 3 (hdac3) from Xenopus tropicalis (Western clawed frog).